A 566-amino-acid polypeptide reads, in one-letter code: Insulinoma-associated protein 2 (566 aa).

Residues 1–20 (MPRGFLVKRTKRTGGLYRVR) are SNAG domain. Residues 32–117 (QGAPPFLEEA…PSPSPAKPAG (86 aa)) form a disordered region. Over residues 103–113 (GPSPSPSPSPA) the composition is skewed to pro residues. The segment at 263-283 (FICQLCKEQYADPFALAQHRC) adopts a C2H2-type 1; atypical zinc-finger fold. Residues 291–313 (YRCPECDKVFSCPANLASHRRWH) form a C2H2-type 2 zinc finger. The interval 310–418 (RRWHKPRPAA…RRVPVPGSTS (109 aa)) is disordered. Positions 318–348 (AAANAATVSSADGKPPSSSSSSSRDSGAIAS) are enriched in low complexity. Residues 352 to 369 (EGKENSRIERTADQHPQA) are compositionally biased toward basic and acidic residues. C2H2-type zinc fingers lie at residues 426–448 (FVCP…LSTH), 470–492 (FACP…RLWH), and 525–548 (FSCK…NKCH).

As to expression, expressed in heart, liver, skeletal muscle, kidney and pancreas, and, to a lesser extent, in brain, lung and spleen. In the pancreas, expressed in islet cells, including insulin- and glucagon-producing alpha- and beta-cells, but not in acinar cells (at protein level). Detected in adrenal glands, particularly in the deeper layer of the cortex (at protein level).

It is found in the cytoplasm. Its subcellular location is the nucleus. Functionally, may function as a growth suppressor or tumor suppressor in liver cells and in certain neurons. In Homo sapiens (Human), this protein is Insulinoma-associated protein 2 (INSM2).